A 3387-amino-acid chain; its full sequence is Genome polyprotein (3387 aa).

Over 1–100 the chain is Cytoplasmic; sequence MNQRKKVVRP…LNILNGRKRS (100 aa). The hydrophobic; homodimerization of capsid protein C stretch occupies residues 36 to 71; it reads LFSGKGPLRMVLAFITFLRVLSIPPTAGILKRWGQL. A propeptide spans 100–113 (ER anchor for the capsid protein C, removed in mature form by serine protease NS3); the sequence is STVTLLCLIPTVMA. The helical transmembrane segment at 101–117 threads the bilayer; the sequence is TVTLLCLIPTVMAFHLS. Residues 118-237 lie on the Extracellular side of the membrane; it reads TRDGEPLMIV…GAWKHAQRVE (120 aa). Asn182 carries an N-linked (GlcNAc...) asparagine; by host glycan. Residues 238–258 traverse the membrane as a helical segment; the sequence is SWILRNPGFALLAGFMAYMIG. Topologically, residues 259 to 265 are cytoplasmic; it reads QTGIQRT. A helical transmembrane segment spans residues 266–279; sequence VFFVLMMLVAPSYG. Over 280–725 the chain is Extracellular; the sequence is MRCIGVGNRD…HQVFGSVYTT (446 aa). Disulfide bonds link Cys282–Cys309, Cys339–Cys400, Cys353–Cys384, and Cys371–Cys395. A glycan (N-linked (GlcNAc...) asparagine; by host) is linked at Asn346. Positions 377-390 are fusion peptide; sequence DRGWGNGCGLFGKG. Asn432 is a glycosylation site (N-linked (GlcNAc...) asparagine; by host). 2 cysteine pairs are disulfide-bonded: Cys464–Cys564 and Cys581–Cys612. A helical membrane pass occupies residues 726 to 746; it reads MFGGVSWMVRILIGLLVLWIG. Over 747 to 751 the chain is Cytoplasmic; the sequence is TNSRN. A helical membrane pass occupies residues 752–772; that stretch reads TPMAMTCIAVGGITLFLGFTV. The Extracellular portion of the chain corresponds to 773–1193; that stretch reads QADMGCVVSW…IMLGDTMLSR (421 aa). 6 disulfide bridges follow: Cys778-Cys789, Cys829-Cys917, Cys953-Cys997, Cys1054-Cys1103, Cys1065-Cys1087, and Cys1086-Cys1090. N-linked (GlcNAc...) asparagine; by host glycosylation is found at Asn904 and Asn981. Residues 1194–1218 traverse the membrane as a helical segment; it reads VGGQTHLAIMIVFKMSPGYVLGVFL. At 1219 to 1224 the chain is on the lumenal side; that stretch reads RKLTSR. A helical membrane pass occupies residues 1225–1243; that stretch reads ETALMVIGMAMTTVFSIPH. Topologically, residues 1244-1267 are cytoplasmic; it reads DLMELIDGISLGLILLKMVTHFDN. Residues 1268 to 1288 traverse the membrane as a helical segment; that stretch reads TQVGTLALSLTFIRSTMPLTM. Ala1289 is a topological domain (lumenal). A helical membrane pass occupies residues 1290-1308; that stretch reads WRTIMAVLFAVTLIPLCRT. Residues 1309–1316 are Lumenal-facing; sequence SCLQKQSH. A helical membrane pass occupies residues 1317–1337; it reads WVEITAIILGAQALPVYLMTL. Over 1338–1345 the chain is Cytoplasmic; the sequence is MKGASKRS. Residues 1346–1366 form a helical membrane-spanning segment; sequence WPLNEGIMAVGLVSLLGSALL. Residues 1367 to 1369 lie on the Lumenal side of the membrane; that stretch reads KND. Residues 1370–1390 traverse the membrane as a helical segment; it reads VPLAGPMVAGGLLLAAYVMSG. At 1391-1444 the chain is on the cytoplasmic side; sequence SSADLSLERAANVQWDEMADITGSSPIIEVKQDEDGSFSIRDVEETNMITLLVK. Positions 1397–1436 are interacts with and activates NS3 protease; the sequence is LERAANVQWDEMADITGSSPIIEVKQDEDGSFSIRDVEET. Residues 1445–1465 constitute an intramembrane region (helical); that stretch reads LALITVSGLYPLAIPITMTLW. The Cytoplasmic segment spans residues 1466–2146; it reads YMWQVRTQRS…LNELPESLET (681 aa). The 178-residue stretch at 1475–1652 folds into the Peptidase S7 domain; it reads SGALWDVPSP…ERIGEPDYEV (178 aa). Residues His1525, Asp1549, and Ser1609 each act as charge relay system; for serine protease NS3 activity in the active site. The region spanning 1654–1810 is the Helicase ATP-binding domain; sequence EDIFRKKRLT…QSNSPIEDIE (157 aa). The tract at residues 1658-1661 is important for RNA-binding; sequence RKKR. 1667 to 1674 contacts ATP; it reads LHPGAGKT. The short motif at 1758-1761 is the DEAH box element; the sequence is DEAH. In terms of domain architecture, Helicase C-terminal spans 1820 to 1987; sequence TGFDWITDYQ…IIPTLFGPER (168 aa). Position 1862 is an N6-acetyllysine; by host (Lys1862). Residues 2147 to 2167 form a helical membrane-spanning segment; it reads LMLVALLGAMTAGIFLFFMQG. Residues 2168 to 2169 are Lumenal-facing; sequence KG. An intramembrane region (helical) is located at residues 2170-2190; it reads IGKLSVGLIAIAVASGLLWVA. Residue Glu2191 is a topological domain, lumenal. Residues 2192–2212 traverse the membrane as a helical segment; sequence IQPQWIAASIILEFFLMVLLI. The Cytoplasmic portion of the chain corresponds to 2213-2225; that stretch reads PEPEKQRTPQDNQ. A helical transmembrane segment spans residues 2226–2246; sequence LIYVILAILTIIGLVAANEMG. The Lumenal portion of the chain corresponds to 2247 to 2270; the sequence is LIEKTKADFGFYQVKTETTILDVD. The segment at residues 2271–2291 is an intramembrane region (helical); sequence LRPASAWTLYAVATTILTPML. Residues 2292–2301 are Lumenal-facing; it reads RHTIENTSAN. Asn2297 and Asn2301 each carry an N-linked (GlcNAc...) asparagine; by host glycan. The segment at residues 2302–2322 is an intramembrane region (helical); the sequence is LSLAAIANQAAVLMGLGKGWP. The Lumenal segment spans residues 2323-2343; that stretch reads LHRMDLGVPLLAMGCYSQVNP. Residues 2344–2364 form a helical membrane-spanning segment; the sequence is TTLTASLVMLLVHYAIIGPGL. The Cytoplasmic segment spans residues 2365 to 2409; the sequence is QAKATREAQKRTAAGIMKNPTVDGITVIDLEPISYDPKFEKQLGQ. A helical membrane pass occupies residues 2410–2430; sequence VMLLVLCAGQLLLMRTTWAFC. At 2431 to 2455 the chain is on the lumenal side; sequence EVLTLATGPVLTLWEGNPGRFWNTT. Asn2453 carries an N-linked (GlcNAc...) asparagine; by host glycan. A helical transmembrane segment spans residues 2456-2476; the sequence is IAVSTANIFRGSYLAGAGLAF. The Cytoplasmic segment spans residues 2477–3387; the sequence is SLIKNAQTPR…SALSESEGVL (911 aa). The 263-residue stretch at 2489–2751 folds into the mRNA cap 0-1 NS5-type MT domain; it reads TGTTGETLGE…DVDLGAGTRS (263 aa). Ser2543 contacts S-adenosyl-L-methionine. Ser2543 bears the Phosphoserine mark. Catalysis depends on Lys2548, which acts as the For 2'-O-MTase activity. The short motif at 2564-2567 is the SUMO-interacting motif element; it reads VVDL. Positions 2573, 2574, 2591, 2592, 2618, and 2619 each coordinate S-adenosyl-L-methionine. The active-site For 2'-O-MTase activity is Asp2633. Ile2634 provides a ligand contact to S-adenosyl-L-methionine. Active-site for 2'-O-MTase activity residues include Lys2668 and Glu2704. Position 2706 (Tyr2706) interacts with S-adenosyl-L-methionine. 4 residues coordinate Zn(2+): Glu2925, His2929, Cys2934, and Cys2937. One can recognise a RdRp catalytic domain in the interval 3016–3166; it reads LMYADDTAGW…PLDERFSTSL (151 aa). Zn(2+) contacts are provided by His3200, Cys3216, and Cys3335.

In the N-terminal section; belongs to the class I-like SAM-binding methyltransferase superfamily. mRNA cap 0-1 NS5-type methyltransferase family. In terms of assembly, homodimer. Interacts (via N-terminus) with host EXOC1 (via C-terminus); this interaction results in EXOC1 degradation through the proteasome degradation pathway. Forms heterodimers with envelope protein E in the endoplasmic reticulum and Golgi. As to quaternary structure, homodimer; in the endoplasmic reticulum and Golgi. Interacts with protein prM. Interacts with non-structural protein 1. In terms of assembly, homodimer; Homohexamer when secreted. Interacts with envelope protein E. Interacts (via N-terminus) with serine protease NS3. As to quaternary structure, forms a heterodimer with serine protease NS3. May form homooligomers. In terms of assembly, forms a heterodimer with NS2B. Interacts with NS4B. Interacts with unphosphorylated RNA-directed RNA polymerase NS5; this interaction stimulates RNA-directed RNA polymerase NS5 guanylyltransferase activity. Interacts with host SHFL. Interacts with host MAVS; this interaction inhibits the synthesis of IFN-beta. Interacts with host SHFL. Interacts with host AUP1; the interaction occurs in the presence of Dengue virus NS4B and induces lipophagy which facilitates production of virus progeny particles. As to quaternary structure, interacts with serine protease NS3. In terms of assembly, homodimer. Interacts with host STAT2; this interaction inhibits the phosphorylation of the latter, and, when all viral proteins are present (polyprotein), targets STAT2 for degradation. Interacts with serine protease NS3. Interacts with host PAF1 complex; the interaction may prevent the recruitment of the PAF1 complex to interferon-responsive genes, and thus reduces the immune response. Post-translationally, specific enzymatic cleavages in vivo yield mature proteins. Cleavages in the lumen of endoplasmic reticulum are performed by host signal peptidase, whereas cleavages in the cytoplasmic side are performed by serine protease NS3. Signal cleavage at the 2K-4B site requires a prior NS3 protease-mediated cleavage at the 4A-2K site. In terms of processing, cleaved in post-Golgi vesicles by a host furin, releasing the mature small envelope protein M, and peptide pr. This cleavage is incomplete as up to 30% of viral particles still carry uncleaved prM. N-glycosylated. Post-translationally, N-glycosylated. The excreted form is glycosylated and this is required for efficient secretion of the protein from infected cells. In terms of processing, acetylated by host KAT5. Acetylation modulates NS3 RNA-binding and unwinding activities and plays an important positive role for viral replication. Sumoylation of RNA-directed RNA polymerase NS5 increases NS5 protein stability allowing proper viral RNA replication. Post-translationally, phosphorylated on serines residues. This phosphorylation may trigger NS5 nuclear localization.

The protein resides in the virion. It localises to the host nucleus. It is found in the host cytoplasm. Its subcellular location is the host perinuclear region. The protein localises to the secreted. The protein resides in the virion membrane. It localises to the host endoplasmic reticulum membrane. It is found in the host mitochondrion. The catalysed reaction is Selective hydrolysis of -Xaa-Xaa-|-Yaa- bonds in which each of the Xaa can be either Arg or Lys and Yaa can be either Ser or Ala.. It catalyses the reaction RNA(n) + a ribonucleoside 5'-triphosphate = RNA(n+1) + diphosphate. It carries out the reaction a ribonucleoside 5'-triphosphate + H2O = a ribonucleoside 5'-diphosphate + phosphate + H(+). The enzyme catalyses ATP + H2O = ADP + phosphate + H(+). The catalysed reaction is a 5'-end (5'-triphosphoguanosine)-ribonucleoside in mRNA + S-adenosyl-L-methionine = a 5'-end (N(7)-methyl 5'-triphosphoguanosine)-ribonucleoside in mRNA + S-adenosyl-L-homocysteine. It catalyses the reaction a 5'-end (N(7)-methyl 5'-triphosphoguanosine)-ribonucleoside in mRNA + S-adenosyl-L-methionine = a 5'-end (N(7)-methyl 5'-triphosphoguanosine)-(2'-O-methyl-ribonucleoside) in mRNA + S-adenosyl-L-homocysteine + H(+). In terms of biological role, plays a role in virus budding by binding to the cell membrane and gathering the viral RNA into a nucleocapsid that forms the core of a mature virus particle. During virus entry, may induce genome penetration into the host cytoplasm after hemifusion induced by the surface proteins. Can migrate to the cell nucleus where it modulates host functions. Overcomes the anti-viral effects of host EXOC1 by sequestering and degrading the latter through the proteasome degradation pathway. Inhibits RNA silencing by interfering with host Dicer. Its function is as follows. Prevents premature fusion activity of envelope proteins in trans-Golgi by binding to envelope protein E at pH6.0. After virion release in extracellular space, gets dissociated from E dimers. Functionally, acts as a chaperone for envelope protein E during intracellular virion assembly by masking and inactivating envelope protein E fusion peptide. prM is the only viral peptide matured by host furin in the trans-Golgi network probably to avoid catastrophic activation of the viral fusion activity in acidic Golgi compartment prior to virion release. prM-E cleavage is inefficient, and many virions are only partially matured. These uncleaved prM would play a role in immune evasion. In terms of biological role, may play a role in virus budding. Exerts cytotoxic effects by activating a mitochondrial apoptotic pathway through M ectodomain. May display a viroporin activity. Binds to host cell surface receptor and mediates fusion between viral and cellular membranes. Envelope protein is synthesized in the endoplasmic reticulum in the form of heterodimer with protein prM. They play a role in virion budding in the ER, and the newly formed immature particle is covered with 60 spikes composed of heterodimer between precursor prM and envelope protein E. The virion is transported to the Golgi apparatus where the low pH causes dissociation of PrM-E heterodimers and formation of E homodimers. prM-E cleavage is inefficient, and many virions are only partially matured. These uncleaved prM would play a role in immune evasion. Its function is as follows. Involved in immune evasion, pathogenesis and viral replication. Once cleaved off the polyprotein, is targeted to three destinations: the viral replication cycle, the plasma membrane and the extracellular compartment. Essential for viral replication. Required for formation of the replication complex and recruitment of other non-structural proteins to the ER-derived membrane structures. Excreted as a hexameric lipoparticle that plays a role against host immune response. Antagonizing the complement function. Binds to the host macrophages and dendritic cells. Inhibits signal transduction originating from Toll-like receptor 3 (TLR3). Functionally, disrupts the host endothelial glycocalyx layer of host pulmonary microvascular endothelial cells, inducing degradation of sialic acid and shedding of heparan sulfate proteoglycans. NS1 induces expression of sialidases, heparanase, and activates cathepsin L, which activates heparanase via enzymatic cleavage. These effects are probably linked to the endothelial hyperpermeability observed in severe dengue disease. In terms of biological role, component of the viral RNA replication complex that functions in virion assembly and antagonizes the host immune response. Required cofactor for the serine protease function of NS3. May have membrane-destabilizing activity and form viroporins. Its function is as follows. Displays three enzymatic activities: serine protease, NTPase and RNA helicase. NS3 serine protease, in association with NS2B, performs its autocleavage and cleaves the polyprotein at dibasic sites in the cytoplasm: C-prM, NS2A-NS2B, NS2B-NS3, NS3-NS4A, NS4A-2K and NS4B-NS5. NS3 RNA helicase binds RNA and unwinds dsRNA in the 3' to 5' direction. Functionally, regulates the ATPase activity of the NS3 helicase activity. NS4A allows NS3 helicase to conserve energy during unwinding. Plays a role in the inhibition of the host innate immune response. Interacts with host MAVS and thereby prevents the interaction between RIGI and MAVS. In turn, IFN-beta production is impaired. Interacts with host AUP1 which mediates induction of lipophagy in host cells and facilitates production of virus progeny particles. In terms of biological role, functions as a signal peptide for NS4B and is required for the interferon antagonism activity of the latter. Induces the formation of ER-derived membrane vesicles where the viral replication takes place. Inhibits interferon (IFN)-induced host STAT1 phosphorylation and nuclear translocation, thereby preventing the establishment of cellular antiviral state by blocking the IFN-alpha/beta pathway. Its function is as follows. Replicates the viral (+) and (-) RNA genome, and performs the capping of genomes in the cytoplasm. NS5 methylates viral RNA cap at guanine N-7 and ribose 2'-O positions. Besides its role in RNA genome replication, also prevents the establishment of cellular antiviral state by blocking the interferon-alpha/beta (IFN-alpha/beta) signaling pathway. Inhibits host TYK2 and STAT2 phosphorylation, thereby preventing activation of JAK-STAT signaling pathway. May reduce immune responses by preventing the recruitment of the host PAF1 complex to interferon-responsive genes. The sequence is that of Genome polyprotein from Aedes aegypti (Yellowfever mosquito).